We begin with the raw amino-acid sequence, 515 residues long: uncharacterized protein (515 aa).

The interval 146-171 (SSEVDRNSETEGTREENSNTSDWDEQ) is disordered. Over residues 148–162 (EVDRNSETEGTREEN) the composition is skewed to basic and acidic residues.

It localises to the cytoplasm. The protein localises to the nucleus. This is an uncharacterized protein from Schizosaccharomyces pombe (strain 972 / ATCC 24843) (Fission yeast).